The following is a 641-amino-acid chain: 1-deoxy-D-xylulose-5-phosphate synthase (641 aa).

Thiamine diphosphate-binding positions include His79 and 120–122 (GHS). Position 151 (Asp151) interacts with Mg(2+). Thiamine diphosphate-binding positions include 152-153 (GS), Asn180, Tyr290, and Glu372. Mg(2+) is bound at residue Asn180.

Belongs to the transketolase family. DXPS subfamily. Homodimer. The cofactor is Mg(2+). Requires thiamine diphosphate as cofactor.

The enzyme catalyses D-glyceraldehyde 3-phosphate + pyruvate + H(+) = 1-deoxy-D-xylulose 5-phosphate + CO2. It participates in metabolic intermediate biosynthesis; 1-deoxy-D-xylulose 5-phosphate biosynthesis; 1-deoxy-D-xylulose 5-phosphate from D-glyceraldehyde 3-phosphate and pyruvate: step 1/1. In terms of biological role, catalyzes the acyloin condensation reaction between C atoms 2 and 3 of pyruvate and glyceraldehyde 3-phosphate to yield 1-deoxy-D-xylulose-5-phosphate (DXP). The protein is 1-deoxy-D-xylulose-5-phosphate synthase of Rhodopseudomonas palustris (strain TIE-1).